The sequence spans 508 residues: Kinesin light chain (508 aa).

Residues 34–129 adopt a coiled-coil conformation; the sequence is IAEVQKDNEK…KKHLEFMASV (96 aa). Residues 156–175 are disordered; that stretch reads DEENEDRHNMSPTPPSQFAN. At Thr168 the chain carries Phosphothreonine. TPR repeat units follow at residues 186-219, 228-261, 270-303, 312-345, 354-387, and 437-470; these read LRTLHNLVIQYASQGRYEVAVPLCKQALEDLERT, ATMLNILALVYRDQNKYKEAANLLNDALSIRGKT, AATLNNLAVLYGKRGKYKDAEPLCKRALEIREKV, AKQLNNLALLCQNQGKYDEVEKYYQRALDIYESK, AKTKNNLAGCYLKQGRYTEAEILYKQVLTRAHER, and TTTLKNLGALYRRQGMFEAAETLEDCAMRSKKEA. A Phosphothreonine modification is found at Thr477. Phosphoserine is present on residues Ser480 and Ser485. The interval 484–508 is disordered; sequence TSNEKRRSKAIKEDLDFSEEKNAKP. The span at 493–508 shows a compositional bias: basic and acidic residues; that stretch reads AIKEDLDFSEEKNAKP.

The protein belongs to the kinesin light chain family. Oligomeric complex composed of two heavy chains and two light chains. In terms of tissue distribution, ubiquitous.

The protein resides in the cytoplasm. It localises to the cytoskeleton. Functionally, kinesin is a microtubule-associated force-producing protein that may play a role in organelle transport. The light chain may function in coupling of cargo to the heavy chain or in the modulation of its ATPase activity. The polypeptide is Kinesin light chain (Klc) (Drosophila melanogaster (Fruit fly)).